The chain runs to 409 residues: F-box/kelch-repeat protein At1g48625 (409 aa).

An F-box domain is found at 2-49; that stretch reads ATMISNLPRDLMEEILSRVPLKSMRAVRLTCKNWHTLSITISESLAKM. 2 Kelch repeats span residues 169–218 and 221–266; these read FIDY…LKGN and WCAR…ILSC.

The protein is F-box/kelch-repeat protein At1g48625 of Arabidopsis thaliana (Mouse-ear cress).